The sequence spans 432 residues: Adenylosuccinate synthetase (432 aa).

Residues 12–18 and 40–42 each bind GTP; these read GDEGKGK and GHT. The active-site Proton acceptor is the aspartate 13. 2 residues coordinate Mg(2+): aspartate 13 and glycine 40. Residues 13 to 16, 38 to 41, threonine 128, arginine 142, glutamine 223, threonine 238, and arginine 302 contribute to the IMP site; these read DEGK and NAGH. Histidine 41 acts as the Proton donor in catalysis. 298 to 304 provides a ligand contact to substrate; it reads TTTGRPR. GTP is bound by residues arginine 304, 330 to 332, and 417 to 419; these read HLD and GVG.

This sequence belongs to the adenylosuccinate synthetase family. As to quaternary structure, homodimer. It depends on Mg(2+) as a cofactor.

It is found in the cytoplasm. It carries out the reaction IMP + L-aspartate + GTP = N(6)-(1,2-dicarboxyethyl)-AMP + GDP + phosphate + 2 H(+). Its pathway is purine metabolism; AMP biosynthesis via de novo pathway; AMP from IMP: step 1/2. In terms of biological role, plays an important role in the de novo pathway of purine nucleotide biosynthesis. Catalyzes the first committed step in the biosynthesis of AMP from IMP. The protein is Adenylosuccinate synthetase of Symbiobacterium thermophilum (strain DSM 24528 / JCM 14929 / IAM 14863 / T).